A 350-amino-acid polypeptide reads, in one-letter code: Twinfilin-1 (350 aa).

Serine 2 is subject to N-acetylserine. Residues 2-139 (SHQTGIQASE…SLHGYKKYLL (138 aa)) enclose the ADF-H 1 domain. 2 positions are modified to phosphoserine: serine 143 and serine 277. The 139-residue stretch at 175-313 (LQGVAFPISR…TADFLYEEVH (139 aa)) folds into the ADF-H 2 domain. Tyrosine 309 carries the phosphotyrosine modification. Residues 316-350 (QHAHKQSFAKPKGPAGKRGIRRLIRGPAETEATTD) form a disordered region. Threonine 349 is modified (phosphothreonine).

It belongs to the actin-binding proteins ADF family. Twinfilin subfamily. In terms of assembly, interacts with G-actin; ADP-actin form and capping protein (CP). May also be able to interact with TWF2 and phosphoinositides, PI(4,5)P2. When bound to PI(4,5)P2, it is down-regulated. Interacts with ACTG1. In terms of processing, phosphorylated on serine and threonine residues. In terms of tissue distribution, expressed at high levels in the colon, testis, ovary, prostate and lung. Expressed at lower levels in the brain, bladder and heart. Not detected in liver.

Its subcellular location is the cytoplasm. The protein localises to the cytoskeleton. Functionally, actin-binding protein involved in motile and morphological processes. Inhibits actin polymerization, likely by sequestering G-actin. By capping the barbed ends of filaments, it also regulates motility. Seems to play an important role in clathrin-mediated endocytosis and distribution of endocytic organelles. The sequence is that of Twinfilin-1 (TWF1) from Homo sapiens (Human).